A 411-amino-acid chain; its full sequence is CinA-like protein (411 aa).

This sequence belongs to the CinA family.

This is CinA-like protein from Dictyoglomus turgidum (strain DSM 6724 / Z-1310).